Consider the following 1059-residue polypeptide: DNA (cytosine-5)-methyltransferase CMT1 (1059 aa).

Disordered stretches follow at residues Met-1–Ala-196 and Cys-230–Arg-272. Over residues Ala-29 to Asp-41 the composition is skewed to acidic residues. 3 stretches are compositionally biased toward basic and acidic residues: residues Arg-42 to Ala-79, Arg-92 to Ala-129, and Ser-147 to Lys-157. Over residues Val-158–Ala-167 the composition is skewed to basic residues. Residues Arg-252 to Val-262 are compositionally biased toward basic and acidic residues. A BAH domain is found at Glu-312–Pro-436. In terms of domain architecture, SAM-dependent MTase C5-type spans Ala-479–Glu-1017. The Chromo domain occupies Phe-584 to Leu-649. Cys-662 is an active-site residue.

The protein belongs to the class I-like SAM-binding methyltransferase superfamily. C5-methyltransferase family.

It localises to the nucleus. The enzyme catalyses a 2'-deoxycytidine in DNA + S-adenosyl-L-methionine = a 5-methyl-2'-deoxycytidine in DNA + S-adenosyl-L-homocysteine + H(+). Its function is as follows. Involved in CpXpG DNA methylation. May not play a major role in maintaining CpXpG methylation. The protein is DNA (cytosine-5)-methyltransferase CMT1 of Oryza sativa subsp. japonica (Rice).